A 507-amino-acid polypeptide reads, in one-letter code: Maturase K (507 aa).

This sequence belongs to the intron maturase 2 family. MatK subfamily.

The protein resides in the plastid. The protein localises to the chloroplast. Functionally, usually encoded in the trnK tRNA gene intron. Probably assists in splicing its own and other chloroplast group II introns. This is Maturase K from Magnolia figo (Banana shrub).